The following is a 192-amino-acid chain: Peptidyl-tRNA hydrolase (192 aa).

TRNA is bound at residue H17. Catalysis depends on H22, which acts as the Proton acceptor. TRNA-binding residues include F68, N70, and N116.

The protein belongs to the PTH family. In terms of assembly, monomer.

Its subcellular location is the cytoplasm. It catalyses the reaction an N-acyl-L-alpha-aminoacyl-tRNA + H2O = an N-acyl-L-amino acid + a tRNA + H(+). Hydrolyzes ribosome-free peptidyl-tRNAs (with 1 or more amino acids incorporated), which drop off the ribosome during protein synthesis, or as a result of ribosome stalling. Its function is as follows. Catalyzes the release of premature peptidyl moieties from peptidyl-tRNA molecules trapped in stalled 50S ribosomal subunits, and thus maintains levels of free tRNAs and 50S ribosomes. This Stenotrophomonas maltophilia (strain K279a) protein is Peptidyl-tRNA hydrolase.